The sequence spans 90 residues: Probable Fe(2+)-trafficking protein (90 aa).

It belongs to the Fe(2+)-trafficking protein family.

Functionally, could be a mediator in iron transactions between iron acquisition and iron-requiring processes, such as synthesis and/or repair of Fe-S clusters in biosynthetic enzymes. This chain is Probable Fe(2+)-trafficking protein, found in Delftia acidovorans (strain DSM 14801 / SPH-1).